Here is a 261-residue protein sequence, read N- to C-terminus: Glucosamine-6-phosphate deaminase (261 aa).

Asp67 functions as the Proton acceptor; for enolization step in the catalytic mechanism. The For ring-opening step role is filled by Asn136. His138 acts as the Proton acceptor; for ring-opening step in catalysis. Catalysis depends on Glu143, which acts as the For ring-opening step.

Belongs to the glucosamine/galactosamine-6-phosphate isomerase family. NagB subfamily.

The catalysed reaction is alpha-D-glucosamine 6-phosphate + H2O = beta-D-fructose 6-phosphate + NH4(+). It functions in the pathway amino-sugar metabolism; N-acetylneuraminate degradation; D-fructose 6-phosphate from N-acetylneuraminate: step 5/5. Catalyzes the reversible isomerization-deamination of glucosamine 6-phosphate (GlcN6P) to form fructose 6-phosphate (Fru6P) and ammonium ion. This chain is Glucosamine-6-phosphate deaminase, found in Cutibacterium acnes (strain DSM 16379 / KPA171202) (Propionibacterium acnes).